Here is a 215-residue protein sequence, read N- to C-terminus: Cytochrome b6 (215 aa).

Residues 32-52 (IFYCLGGITLTCFLVQVATGF) form a helical membrane-spanning segment. Cysteine 35 contacts heme c. Positions 86 and 100 each coordinate heme b. A run of 3 helical transmembrane segments spans residues 90–110 (ASMMVLMMILHVFRVYLTGGF), 116–136 (LTWVTGVVLGVLTASFGVTGY), and 186–206 (LHTFVLPLLTAVFMLMHFLMI). The heme b site is built by histidine 187 and histidine 202.

This sequence belongs to the cytochrome b family. PetB subfamily. In terms of assembly, the 4 large subunits of the cytochrome b6-f complex are cytochrome b6, subunit IV (17 kDa polypeptide, PetD), cytochrome f and the Rieske protein, while the 4 small subunits are PetG, PetL, PetM and PetN. The complex functions as a dimer. Heme b is required as a cofactor. Requires heme c as cofactor.

The protein localises to the plastid. It is found in the chloroplast thylakoid membrane. Its function is as follows. Component of the cytochrome b6-f complex, which mediates electron transfer between photosystem II (PSII) and photosystem I (PSI), cyclic electron flow around PSI, and state transitions. This is Cytochrome b6 from Arabidopsis thaliana (Mouse-ear cress).